Here is a 717-residue protein sequence, read N- to C-terminus: ATP-dependent zinc metalloprotease FtsH (717 aa).

Residues 1–9 (MKNASRIFK) are Cytoplasmic-facing. The chain crosses the membrane as a helical span at residues 10–30 (GPLIWILLCIGLIIVFLQFAG). Residues 31-111 (SGNGYKDIPT…SWQGENPGQS (81 aa)) are Extracellular-facing. A helical transmembrane segment spans residues 112–132 (IWKALLINFLPFVIILLFFLW). The Cytoplasmic segment spans residues 133 to 717 (AMNAAQGMGG…NGNPWGPPRS (585 aa)). 207–214 (GPPGTGKT) provides a ligand contact to ATP. Histidine 429 serves as a coordination point for Zn(2+). The active site involves glutamate 430. The Zn(2+) site is built by histidine 433 and aspartate 505. The tract at residues 617–717 (AFTGSDKRVP…NGNPWGPPRS (101 aa)) is disordered. A compositionally biased stretch (pro residues) spans 691-717 (PEPPSPTHPGEGPQPPSNGNPWGPPRS).

In the central section; belongs to the AAA ATPase family. The protein in the C-terminal section; belongs to the peptidase M41 family. In terms of assembly, homohexamer. It depends on Zn(2+) as a cofactor.

The protein localises to the cell membrane. Acts as a processive, ATP-dependent zinc metallopeptidase for both cytoplasmic and membrane proteins. Plays a role in the quality control of integral membrane proteins. This chain is ATP-dependent zinc metalloprotease FtsH, found in Cutibacterium acnes (strain SK137) (Propionibacterium acnes).